Here is a 762-residue protein sequence, read N- to C-terminus: 1-phosphatidylinositol 4,5-bisphosphate phosphodiesterase delta-4 (762 aa).

The region spanning 16–124 is the PH domain; the sequence is LLMQEGMPMR…WMRGLQLLVD (109 aa). Residues 26 to 53 are substrate binding; sequence KVRSKSWKKLRYFRLQNDGMTVWHARQA. 3 consecutive EF-hand domains span residues 134 to 169, 170 to 205, and 206 to 237; these read RLDQWLSDWFQRGDKNQDGKMSFQEVQRLLHLMNVE, MDQEYAFSLFQAADTSQSGTLEGEEFVQFYKALTKR, and AEVQELFESFSADGQKLTLLEFLDFLQEEQKE. 10 residues coordinate Ca(2+): D147, N149, D151, K153, E158, D183, S185, S187, T189, and E194. Residues 213 to 243 carry the GBA motif; sequence ESFSADGQKLTLLEFLDFLQEEQKERDCTSE. Residues 290–435 enclose the PI-PLC X-box domain; that stretch reads QDMTQPLNHY…LRRKILVKGK (146 aa). Residue H305 is part of the active site. Ca(2+)-binding residues include N306, E335, and D337. Residue H350 is part of the active site. E384 is a binding site for Ca(2+). Residues K433 and K435 each contribute to the substrate site. Acidic residues predominate over residues 443–471; it reads LEYEEEEAEPELEESELALESQFETEPEP. The tract at residues 443-483 is disordered; the sequence is LEYEEEEAEPELEESELALESQFETEPEPQEQNLQNKDKKK. S457 carries the phosphoserine modification. A PI-PLC Y-box domain is found at 493–609; that stretch reads LSSLVIYLKS…GYVLKPDFLR (117 aa). S522 and R549 together coordinate substrate. One can recognise a C2 domain in the interval 609–736; sequence RDIQSSFHPE…QGYRHIHLLS (128 aa). Residues I650, D652, N676, D705, Y706, and D707 each contribute to the Ca(2+) site. The PDZ-binding signature appears at 731–734; that stretch reads HIHL.

In terms of assembly, interacts with GRIP1. As to quaternary structure, interacts (via GBA motif) with guanine nucleotide-binding protein G(i) alpha subunit GNAI3 (inactive GDP-bound form); high-affinity interaction. Interacts (via GBA motif) with guanine nucleotide-binding protein G(i) alpha subunit GNAI3 (inactive GDP-bound form); low-affinity interaction. Ca(2+) serves as cofactor. Highly expressed in skeletal muscle and kidney tissues, and at moderate level in intestinal tissue. Expressed in corneal epithelial cells.

It is found in the membrane. It localises to the nucleus. The protein localises to the cytoplasm. Its subcellular location is the endoplasmic reticulum. It catalyses the reaction a 1,2-diacyl-sn-glycero-3-phospho-(1D-myo-inositol-4,5-bisphosphate) + H2O = 1D-myo-inositol 1,4,5-trisphosphate + a 1,2-diacyl-sn-glycerol + H(+). The catalysed reaction is a 1,2-diacyl-sn-glycero-3-phospho-(1D-myo-inositol) + H2O = 1D-myo-inositol 1-phosphate + a 1,2-diacyl-sn-glycerol + H(+). Functionally, hydrolyzes the phosphatidylinositol 4,5-bisphosphate (PIP2) to generate 2 second messenger molecules diacylglycerol (DAG) and inositol 1,4,5-trisphosphate (IP3). DAG mediates the activation of protein kinase C (PKC), while IP3 releases Ca(2+) from intracellular stores. Required for acrosome reaction in sperm during fertilization, probably by acting as an important enzyme for intracellular Ca(2+) mobilization in the zona pellucida-induced acrosome reaction. May play a role in cell growth. Modulates the liver regeneration in cooperation with nuclear PKC. Overexpression up-regulates the Erk signaling pathway and proliferation. Acts as a non-receptor guanine nucleotide exchange factor which binds to and activates guanine nucleotide-binding protein (G-protein) alpha subunit GNAI3. This Homo sapiens (Human) protein is 1-phosphatidylinositol 4,5-bisphosphate phosphodiesterase delta-4.